A 1047-amino-acid polypeptide reads, in one-letter code: Exportin-6 (1047 aa).

Positions 32–98 (IDTILNNYKA…KGLLLDIYLN (67 aa)) constitute an Importin N-terminal domain.

This sequence belongs to the exportin family.

Its subcellular location is the nucleus. The protein resides in the cytoplasm. In terms of biological role, probably mediates the nuclear export of actin and profilin-actin complexes. This chain is Exportin-6 (xpo6), found in Dictyostelium discoideum (Social amoeba).